Consider the following 66-residue polypeptide: Large ribosomal subunit protein uL29 (66 aa).

Belongs to the universal ribosomal protein uL29 family.

This is Large ribosomal subunit protein uL29 from Bacillus anthracis (strain CDC 684 / NRRL 3495).